The chain runs to 90 residues: Arminin 45266 (90 aa).

The first 20 residues, 1-20 (MKSASLILFVALVALTYARS), serve as a signal peptide directing secretion. Positions 21 to 59 (YEDVKEEIKNEVEKEILDDLEEENDELDDNTQEVNDPRA) are excised as a propeptide. Thr87 bears the Threonine amide mark.

This sequence belongs to the arminin family. Expressed in entodermal epithelium along the body column.

The protein resides in the secreted. The protein localises to the target cell membrane. Functionally, antimicrobial peptide with a broad-spectrum antimicrobial activity. Keeps its antibacterial activity under a wide range of salt concentrations that mimic physiological conditions of human blood, which is surprising, since Hydra is an obligate freshwater animal with nearly no salt tolerance. Does not affect red blood cells. This Hydra vulgaris (Hydra) protein is Arminin 45266.